A 196-amino-acid chain; its full sequence is Small ribosomal subunit protein uS4c (196 aa).

The tract at residues 16 to 36 (GALPGLTRKTPKSGSNLKKKF) is disordered. In terms of domain architecture, S4 RNA-binding spans 89–169 (MRLDNILFRL…LPKHLTIDTL (81 aa)).

It belongs to the universal ribosomal protein uS4 family. Part of the 30S ribosomal subunit. Contacts protein S5. The interaction surface between S4 and S5 is involved in control of translational fidelity.

It localises to the plastid. The protein localises to the chloroplast. Functionally, one of the primary rRNA binding proteins, it binds directly to 16S rRNA where it nucleates assembly of the body of the 30S subunit. With S5 and S12 plays an important role in translational accuracy. The sequence is that of Small ribosomal subunit protein uS4c (rps4) from Cinna latifolia (Drooping woodreed).